Reading from the N-terminus, the 432-residue chain is Putative D-alanyl-D-alanine carboxypeptidase (432 aa).

The chain crosses the membrane as a helical; Signal-anchor span at residues 7 to 25 (ATVLLTFSLSAFAVEYPVL).

The protein belongs to the peptidase S12 family. YfeW subfamily.

It is found in the cell inner membrane. The enzyme catalyses Preferential cleavage: (Ac)2-L-Lys-D-Ala-|-D-Ala. Also transpeptidation of peptidyl-alanyl moieties that are N-acyl substituents of D-alanine.. The sequence is that of Putative D-alanyl-D-alanine carboxypeptidase from Salmonella typhi.